Consider the following 389-residue polypeptide: Glutamate 5-kinase (389 aa).

Residue lysine 17 coordinates ATP. Serine 57, aspartate 144, and asparagine 156 together coordinate substrate. 176 to 177 (SD) contacts ATP. The 78-residue stretch at 282-359 (AGEIHVDAGA…NEIETILGYV (78 aa)) folds into the PUA domain.

Belongs to the glutamate 5-kinase family.

Its subcellular location is the cytoplasm. The enzyme catalyses L-glutamate + ATP = L-glutamyl 5-phosphate + ADP. The protein operates within amino-acid biosynthesis; L-proline biosynthesis; L-glutamate 5-semialdehyde from L-glutamate: step 1/2. Its function is as follows. Catalyzes the transfer of a phosphate group to glutamate to form L-glutamate 5-phosphate. This is Glutamate 5-kinase from Agrobacterium fabrum (strain C58 / ATCC 33970) (Agrobacterium tumefaciens (strain C58)).